A 98-amino-acid polypeptide reads, in one-letter code: Citrate lyase acyl carrier protein (98 aa).

Serine 14 carries the O-(phosphoribosyl dephospho-coenzyme A)serine modification.

The protein belongs to the CitD family. In terms of assembly, oligomer with a subunit composition of (alpha,beta,gamma)6.

The protein localises to the cytoplasm. In terms of biological role, covalent carrier of the coenzyme of citrate lyase. This Vibrio cholerae serotype O1 (strain ATCC 39541 / Classical Ogawa 395 / O395) protein is Citrate lyase acyl carrier protein.